Consider the following 376-residue polypeptide: Queuine tRNA-ribosyltransferase (376 aa).

Asp90 functions as the Proton acceptor in the catalytic mechanism. Residues 90-94, Asp144, Gln193, and Gly220 each bind substrate; that span reads DSGGF. Positions 251–257 are RNA binding; sequence GVGTPED. The active-site Nucleophile is the Asp270. The interval 275–279 is RNA binding; important for wobble base 34 recognition; sequence TRNAR. Zn(2+) contacts are provided by Cys308, Cys310, Cys313, and His339.

The protein belongs to the queuine tRNA-ribosyltransferase family. As to quaternary structure, homodimer. Within each dimer, one monomer is responsible for RNA recognition and catalysis, while the other monomer binds to the replacement base PreQ1. Zn(2+) is required as a cofactor.

It carries out the reaction 7-aminomethyl-7-carbaguanine + guanosine(34) in tRNA = 7-aminomethyl-7-carbaguanosine(34) in tRNA + guanine. It functions in the pathway tRNA modification; tRNA-queuosine biosynthesis. In terms of biological role, catalyzes the base-exchange of a guanine (G) residue with the queuine precursor 7-aminomethyl-7-deazaguanine (PreQ1) at position 34 (anticodon wobble position) in tRNAs with GU(N) anticodons (tRNA-Asp, -Asn, -His and -Tyr). Catalysis occurs through a double-displacement mechanism. The nucleophile active site attacks the C1' of nucleotide 34 to detach the guanine base from the RNA, forming a covalent enzyme-RNA intermediate. The proton acceptor active site deprotonates the incoming PreQ1, allowing a nucleophilic attack on the C1' of the ribose to form the product. After dissociation, two additional enzymatic reactions on the tRNA convert PreQ1 to queuine (Q), resulting in the hypermodified nucleoside queuosine (7-(((4,5-cis-dihydroxy-2-cyclopenten-1-yl)amino)methyl)-7-deazaguanosine). This chain is Queuine tRNA-ribosyltransferase, found in Cupriavidus pinatubonensis (strain JMP 134 / LMG 1197) (Cupriavidus necator (strain JMP 134)).